Reading from the N-terminus, the 189-residue chain is GTP cyclohydrolase 1 (189 aa).

The Zn(2+) site is built by cysteine 78, histidine 81, and cysteine 150.

This sequence belongs to the GTP cyclohydrolase I family. In terms of assembly, toroid-shaped homodecamer, composed of two pentamers of five dimers.

It catalyses the reaction GTP + H2O = 7,8-dihydroneopterin 3'-triphosphate + formate + H(+). The protein operates within cofactor biosynthesis; 7,8-dihydroneopterin triphosphate biosynthesis; 7,8-dihydroneopterin triphosphate from GTP: step 1/1. The sequence is that of GTP cyclohydrolase 1 from Listeria welshimeri serovar 6b (strain ATCC 35897 / DSM 20650 / CCUG 15529 / CIP 8149 / NCTC 11857 / SLCC 5334 / V8).